An 841-amino-acid polypeptide reads, in one-letter code: MAQALSEEEFQRMQAQLLELRTNNYQLSDELRKNGVELTSLRQKVAYLDKEFSKAQKALSKSKKAQEVEVLLSENEMLQAKLHSQEEDFRLQNSTLMAEFSKLCSQMEQLEQENQQLKEGAAGAGVAQAGPLVDGELLRLQAENTALQKNVAALQERYGKEAGKFSAVSEGQGDPPGGLAPTVLAPMPLAEVELKWEMEKEEKRLLWEQLQGLESSKQAETSRLQEELAKLSEKLKKKQESFCRLQTEKETLFNDSRNKIEELQQRKEADHKAQLARTQKLQQELEAANQSLAELRDQRQGERLEHAAALRALQDQVSIQSADAQEQVEGLLAENNALRTSLAALEQIQTAKTQELNMLREQTTGLAAELQQQQAEYEDLMGQKDDLNSQLQESLRANSRLLEQLQEIGQEKEQLTQELQEARKSAEKRKAMLDELAMETLQEKSQHKEELGAVRLRHEKEVLGVRARYERELRELHEDKKRQEEELRGQIREEKARTRELETLQQTVEELQAQVHSMDGAKGWFERRLKEAEESLQQQQQEQEEALKQCREQHAAELKGKEEELQDVRDQLEQAQEERDCHLKTISSLKQEVKDTVDGQRILEKKGSAALKDLKRQLHLERKRADKLQERLQDILTNSKSRSGLEELVLSEMNSPSRTQTGDSSSISSFSYREILREKESSAVPARSLSSSPQAQPPRPAELSDEEVAELFQRLAETQQEKWMLEEKVKHLEVSSASMAEDLCRKSAIIETYVMDSRIDVSVAAGHTDRSGLGSVLRDLVKPGDENLREMNKKLQNMLEEQLTKNMHLHKDMEVLSQEIVRLSKECVGPPDPDLEPGETS.

Ala2 carries the post-translational modification N-acetylalanine. 2 coiled-coil regions span residues 4–161 and 208–641; these read ALSE…YGKE and EQLQ…NSKS. 2 disordered regions span residues 532–551 and 558–580; these read AEES…KQCR and LKGK…EERD. A phosphoserine mark is found at Ser655, Ser666, Ser668, Ser669, Ser688, Ser690, Ser691, and Ser692. A disordered region spans residues 681–706; it reads SSAVPARSLSSSPQAQPPRPAELSDE. The span at 682-694 shows a compositional bias: low complexity; sequence SAVPARSLSSSPQ. 2 coiled-coil regions span residues 701 to 735 and 785 to 814; these read AELS…LEVS and DENL…KDME.

In terms of assembly, interacts with GRIP1, GRIP2 and AMPA receptors. Interacts (via C-terminus) with MAPK8/JNK1 and MAP3K1/MEKK1; the interaction promotes MAP3K1-mediated phosphorylation of MAPK8. Interacts (via N-terminus) with RAB4A (in GTP-bound form). Interacts (via C-terminus) with STX12. Proteolytically cleaved by caspase-3. A minor C-terminal proteolytic fragment of 30 kDa is produced. Proteolytic cleavage is required for JNK signaling activation.

It is found in the early endosome membrane. The protein localises to the recycling endosome membrane. Its subcellular location is the cell projection. It localises to the axon. The protein resides in the dendrite. It is found in the synapse. In terms of biological role, regulates the endosomal recycling back to the neuronal plasma membrane, possibly by connecting early and late recycling endosomal domains and promoting segregation of recycling endosomes from early endosomal membranes. Involved in the localization of recycling endosomes to dendritic spines, thereby playing a role in the maintenance of dendritic spine morphology. Required for the activity-induced AMPA receptor recycling to dendrite membranes and for long-term potentiation and synaptic plasticity. Functionally, functions as a scaffold protein to facilitate MAP3K1/MEKK1-mediated activation of the JNK1 kinase by phosphorylation, possibly by bringing MAP3K1/MEKK1 and JNK1 in close proximity. This chain is GRIP1-associated protein 1, found in Homo sapiens (Human).